A 276-amino-acid polypeptide reads, in one-letter code: MGQKVHPYSLRIKINRDWKSKWYFDKKLYSEILHEDFLIRRETMKFLKGIKFDISDIEIIRNNLQRVTVVISTPRPGSVIGVKGANLEKIGQLLTRKVSKKINIKIKEIKKPEFDAQIVANGIAKQLENRASYRKLLKSSLLSSISKGIQGIKIKVSGRLGGAEIARSFEVKEGRIPLHTLRANIDYGFAEAYTTYGVIGVKVWLFKGEILGKQINSDAGQVINRKPSKDKVERFDKGKIDDKGRKVVNDDKFSREKLEIGSRSKNDFKNKNDSDI.

Positions 39 to 110 constitute a KH type-2 domain; that stretch reads IRRETMKFLK…KINIKIKEIK (72 aa).

Belongs to the universal ribosomal protein uS3 family. In terms of assembly, part of the 30S ribosomal subunit. Forms a tight complex with proteins S10 and S14.

In terms of biological role, binds the lower part of the 30S subunit head. Binds mRNA in the 70S ribosome, positioning it for translation. The chain is Small ribosomal subunit protein uS3 from Borrelia recurrentis (strain A1).